Reading from the N-terminus, the 332-residue chain is Agamous-like MADS-box protein AGL66 (332 aa).

One can recognise an MADS-box domain in the interval 1-61 (MGRVKLEIKR…DRLSLFSGKT (61 aa)). Residues 120 to 151 (TAINSDVEELEHEVYKLQQQLLMAEEELRKYE) are a coiled coil.

Forms a heterodimer with AGL30. Expressed in pollen.

It is found in the nucleus. In terms of biological role, probable transcription factor that forms a heterodimer with the MADS-box protein AGL30 and is involved in the regulation of pollen maturation at the late stages of pollen development and pollen tube growth. The sequence is that of Agamous-like MADS-box protein AGL66 from Arabidopsis thaliana (Mouse-ear cress).